The sequence spans 355 residues: Peptide chain release factor 1 (355 aa).

At glutamine 233 the chain carries N5-methylglutamine.

Belongs to the prokaryotic/mitochondrial release factor family. In terms of processing, methylated by PrmC. Methylation increases the termination efficiency of RF1.

The protein localises to the cytoplasm. Peptide chain release factor 1 directs the termination of translation in response to the peptide chain termination codons UAG and UAA. This chain is Peptide chain release factor 1, found in Syntrophomonas wolfei subsp. wolfei (strain DSM 2245B / Goettingen).